The following is a 456-amino-acid chain: tRNA-2-methylthio-N(6)-dimethylallyladenosine synthase (456 aa).

Residues 6-123 (KHVYIETYGC…LPNLIEEAQR (118 aa)) form the MTTase N-terminal domain. Positions 15, 52, 86, 160, 164, and 167 each coordinate [4Fe-4S] cluster. Residues 146–380 (RAEGPTAYVS…RILEMAASIS (235 aa)) form the Radical SAM core domain. A TRAM domain is found at 381–444 (EAMVGTEQWV…KNSLRGRLIE (64 aa)).

It belongs to the methylthiotransferase family. MiaB subfamily. Monomer. Requires [4Fe-4S] cluster as cofactor.

The protein localises to the cytoplasm. It carries out the reaction N(6)-dimethylallyladenosine(37) in tRNA + (sulfur carrier)-SH + AH2 + 2 S-adenosyl-L-methionine = 2-methylsulfanyl-N(6)-dimethylallyladenosine(37) in tRNA + (sulfur carrier)-H + 5'-deoxyadenosine + L-methionine + A + S-adenosyl-L-homocysteine + 2 H(+). Catalyzes the methylthiolation of N6-(dimethylallyl)adenosine (i(6)A), leading to the formation of 2-methylthio-N6-(dimethylallyl)adenosine (ms(2)i(6)A) at position 37 in tRNAs that read codons beginning with uridine. The sequence is that of tRNA-2-methylthio-N(6)-dimethylallyladenosine synthase from Dichelobacter nodosus (strain VCS1703A).